Here is a 92-residue protein sequence, read N- to C-terminus: PqqA binding protein (92 aa).

This sequence belongs to the PqqD family. Monomer. Interacts with PqqE.

The protein operates within cofactor biosynthesis; pyrroloquinoline quinone biosynthesis. Its function is as follows. Functions as a PqqA binding protein and presents PqqA to PqqE, in the pyrroloquinoline quinone (PQQ) biosynthetic pathway. The polypeptide is PqqA binding protein (Xanthomonas oryzae pv. oryzae (strain PXO99A)).